Reading from the N-terminus, the 82-residue chain is Small ribosomal subunit protein bS18 (82 aa).

This sequence belongs to the bacterial ribosomal protein bS18 family. Part of the 30S ribosomal subunit. Forms a tight heterodimer with protein bS6.

Binds as a heterodimer with protein bS6 to the central domain of the 16S rRNA, where it helps stabilize the platform of the 30S subunit. The protein is Small ribosomal subunit protein bS18 of Rhizobium meliloti (strain 1021) (Ensifer meliloti).